Consider the following 137-residue polypeptide: Hydrogenase maturation factor HypA (137 aa).

Histidine 2 contacts Ni(2+). Residues cysteine 73, cysteine 75, cysteine 105, and cysteine 108 each contribute to the Zn(2+) site.

Belongs to the HypA/HybF family.

Its function is as follows. Involved in the maturation of [NiFe] hydrogenases. Required for nickel insertion into the metal center of the hydrogenase. The polypeptide is Hydrogenase maturation factor HypA (Methanosarcina mazei (strain ATCC BAA-159 / DSM 3647 / Goe1 / Go1 / JCM 11833 / OCM 88) (Methanosarcina frisia)).